The chain runs to 505 residues: AMP phosphorylase 2 (505 aa).

Residues G169, 195-200 (SRAITT), T204, S265, and K289 contribute to the AMP site.

Belongs to the thymidine/pyrimidine-nucleoside phosphorylase family. Type 2 subfamily.

It catalyses the reaction AMP + phosphate = alpha-D-ribose 1,5-bisphosphate + adenine. It carries out the reaction CMP + phosphate = cytosine + alpha-D-ribose 1,5-bisphosphate. The enzyme catalyses UMP + phosphate = alpha-D-ribose 1,5-bisphosphate + uracil. In terms of biological role, catalyzes the conversion of AMP and phosphate to adenine and ribose 1,5-bisphosphate (R15P). Exhibits phosphorylase activity toward CMP and UMP in addition to AMP. Functions in an archaeal AMP degradation pathway, together with R15P isomerase and RubisCO. This is AMP phosphorylase 2 from Archaeoglobus fulgidus (strain ATCC 49558 / DSM 4304 / JCM 9628 / NBRC 100126 / VC-16).